The following is a 123-amino-acid chain: Ribosome-binding factor A (123 aa).

The protein belongs to the RbfA family. As to quaternary structure, monomer. Binds 30S ribosomal subunits, but not 50S ribosomal subunits or 70S ribosomes.

The protein resides in the cytoplasm. In terms of biological role, one of several proteins that assist in the late maturation steps of the functional core of the 30S ribosomal subunit. Associates with free 30S ribosomal subunits (but not with 30S subunits that are part of 70S ribosomes or polysomes). Required for efficient processing of 16S rRNA. May interact with the 5'-terminal helix region of 16S rRNA. The protein is Ribosome-binding factor A of Neisseria meningitidis serogroup B (strain ATCC BAA-335 / MC58).